The chain runs to 197 residues: ADP-ribosylation factor-like protein 6-interacting protein 1 (197 aa).

Helical transmembrane passes span 43 to 63 (VVFG…LSLI), 64 to 84 (TLLS…PMVS), 129 to 149 (TVFV…GAII), and 150 to 170 (NNLL…GLQN).

It belongs to the ARL6ip family.

It is found in the membrane. The sequence is that of ADP-ribosylation factor-like protein 6-interacting protein 1 from Drosophila melanogaster (Fruit fly).